The primary structure comprises 635 residues: ADP-ribosylation factor-binding protein GGA1 (635 aa).

An N-acetylmethionine modification is found at Met-1. Residues 17–147 enclose the VHS domain; that stretch reads ATNPLNKELN…MLKKQGIVKS (131 aa). The interaction with ARF3 stretch occupies residues 114–273; that stretch reads KILELLYSWT…RLASDTEDND (160 aa). One can recognise a GAT domain in the interval 171 to 298; that stretch reads DEEKSKMLAR…VINLYKQLVR (128 aa). The residue at position 185 (Ser-185) is a Phosphoserine. The tract at residues 299–505 is unstructured hinge; sequence GEEVNGDATA…ITVPLESIKP (207 aa). A disordered region spans residues 305-349; the sequence is DATASSIPGSTSALLDLSGLDLPPPGTTQPATPTRPGNQSSPEQL. Low complexity predominate over residues 313-325; sequence GSTSALLDLSGLD. A Phosphoserine modification is found at Ser-354. Positions 357–361 match the Autoinhibitory motif; sequence DDELM. Disordered regions lie at residues 362 to 422 and 455 to 490; these read SLGL…LDDL and RDLQ…TPTE. Residues 383 to 393 show a composition bias toward polar residues; the sequence is NFQSSDGTESS. Residue Ser-417 is modified to Phosphoserine. Positions 459-476 are enriched in low complexity; sequence SKSSSPSPGAASLLHTTS. The segment covering 477–486 has biased composition (pro residues); sequence PEPPGPPPQA. The GAE domain maps to 506–627; the sequence is SSILPVTVYD…NEMGDVDQFP (122 aa).

It belongs to the GGA protein family. Monomer. Interacts with GGA2 and GGA3. Binds to clathrin and activated ARFs, including ARF1, ARF5 and ARF6. Interacts with RABEP1 and RABGEF1. Interacts with the type-I membrane proteins LRP3, M6PR/CD-MPR and IGF2R/CI-MPR. Interacts (via N-terminal VHS domain) with SORL1/sorLA and SORT1 (via C-terminal cytosolic domain). Interacts with EPN4. Interacts with CCDC91. Interacts with HEATR5B/p200a. Interacts with SYNRG/gamma-synergin. Interacts (via GAE doamin) with NECAP1 and NECAP2. Interacts (via GAE domain) with AFTPH/aftiphilin. Interacts with TSG101 and UBC. Interacts with RNF11. Interacts (via VHS domain) with BACE1 (via DXXLL motif); the interaction highly increases when BACE1 is phosphorylated at 'Ser-498'. Interacts with CNST. Interacts with ADRA2B. Interacts with ARL3; the interaction recruits, in collaboration with RABEP1, PKD1:PKD2 complex to trans-Golgi network and is required for ciliary targeting. Post-translationally, phosphorylated by CK2 and dephosphorylated by PP2A. Phosphorylation of GGA1 allows the internal DXXLL motif to bind the VHS domain and to inhibit the recognition of cargo signals. In terms of processing, ubiquitinated.

It localises to the golgi apparatus. It is found in the trans-Golgi network membrane. Its subcellular location is the endosome membrane. The protein resides in the early endosome membrane. Plays a role in protein sorting and trafficking between the trans-Golgi network (TGN) and endosomes. Mediates the ARF-dependent recruitment of clathrin to the TGN and binds ubiquitinated proteins and membrane cargo molecules with a cytosolic acidic cluster-dileucine (DXXLL) motif. Mediates export of the GPCR receptor ADRA2B to the cell surface. Required for targeting PKD1:PKD2 complex from the trans-Golgi network to the cilium membrane. Regulates retrograde transport of proteins such as phosphorylated form of BACE1 from endosomes to the trans-Golgi network. The chain is ADP-ribosylation factor-binding protein GGA1 (Gga1) from Mus musculus (Mouse).